The chain runs to 921 residues: Valine--tRNA ligase (921 aa).

Positions 40 to 50 (PNVTGSLHMGH) match the 'HIGH' region motif. Residues 522 to 526 (KMSKS) carry the 'KMSKS' region motif. ATP is bound at residue K525. Residues 849 to 921 (MADLIDKEAE…LQHKNRIESL (73 aa)) are a coiled coil.

It belongs to the class-I aminoacyl-tRNA synthetase family. ValS type 1 subfamily. In terms of assembly, monomer.

Its subcellular location is the cytoplasm. The enzyme catalyses tRNA(Val) + L-valine + ATP = L-valyl-tRNA(Val) + AMP + diphosphate. Catalyzes the attachment of valine to tRNA(Val). As ValRS can inadvertently accommodate and process structurally similar amino acids such as threonine, to avoid such errors, it has a 'posttransfer' editing activity that hydrolyzes mischarged Thr-tRNA(Val) in a tRNA-dependent manner. This is Valine--tRNA ligase from Legionella pneumophila (strain Paris).